We begin with the raw amino-acid sequence, 319 residues long: Carbonic anhydrase, chloroplastic (319 aa).

A chloroplast-targeting transit peptide spans 1 to 98 (MSTINGCLTS…AASKVAQITS (98 aa)).

The protein belongs to the beta-class carbonic anhydrase family. Homohexamer.

It localises to the plastid. It is found in the chloroplast stroma. The enzyme catalyses hydrogencarbonate + H(+) = CO2 + H2O. Its function is as follows. Reversible hydration of carbon dioxide. The sequence is that of Carbonic anhydrase, chloroplastic from Spinacia oleracea (Spinach).